The primary structure comprises 62 residues: Short neurotoxin B (62 aa).

Residues 1-16 are compositionally biased toward polar residues; it reads RRCFNHPSSQPQTNKS. The disordered stretch occupies residues 1–21; that stretch reads RRCFNHPSSQPQTNKSCPPGE. 4 disulfide bridges follow: C3–C24, C17–C41, C43–C54, and C55–C60.

It belongs to the three-finger toxin family. Short-chain subfamily. Type I alpha-neurotoxin sub-subfamily. As to expression, expressed by the venom gland.

It is found in the secreted. Its function is as follows. Binds to muscle nicotinic acetylcholine receptor (nAChR) and inhibit acetylcholine from binding to the receptor, thereby impairing neuromuscular transmission. The chain is Short neurotoxin B from Laticauda crockeri (Crocker's sea snake).